A 422-amino-acid polypeptide reads, in one-letter code: uncharacterized protein (422 aa).

The 79-residue stretch at 5–83 (CVVYVGNIPY…RRLRVDFPTA (79 aa)) folds into the RRM domain. Residues 337 to 358 (RSSSIPSSGSIRSPSLTTTSAQ) are disordered.

The protein resides in the nucleus. This is an uncharacterized protein from Schizosaccharomyces pombe (strain 972 / ATCC 24843) (Fission yeast).